The sequence spans 104 residues: Intracellular chorismate mutase (104 aa).

In terms of domain architecture, Chorismate mutase spans 23–104; the sequence is AVPEIDDLRR…LRLGRGRLGY (82 aa). Chorismate-binding residues include Arg-59, Val-68, and Glu-72.

As to quaternary structure, homodimer. Probably interacts with AroG (MSMEG_4244).

It is found in the cytoplasm. The enzyme catalyses chorismate = prephenate. The protein operates within metabolic intermediate biosynthesis; prephenate biosynthesis; prephenate from chorismate: step 1/1. The formation of the complex with AroG activates the chorismate mutase activity. Functionally, catalyzes the Claisen rearrangement of chorismate to prephenate. Probably involved in the aromatic amino acid biosynthesis. This is Intracellular chorismate mutase from Mycolicibacterium smegmatis (strain ATCC 700084 / mc(2)155) (Mycobacterium smegmatis).